The following is a 572-amino-acid chain: Proline--tRNA ligase (572 aa).

The protein belongs to the class-II aminoacyl-tRNA synthetase family. ProS type 1 subfamily. As to quaternary structure, homodimer.

It localises to the cytoplasm. The enzyme catalyses tRNA(Pro) + L-proline + ATP = L-prolyl-tRNA(Pro) + AMP + diphosphate. In terms of biological role, catalyzes the attachment of proline to tRNA(Pro) in a two-step reaction: proline is first activated by ATP to form Pro-AMP and then transferred to the acceptor end of tRNA(Pro). As ProRS can inadvertently accommodate and process non-cognate amino acids such as alanine and cysteine, to avoid such errors it has two additional distinct editing activities against alanine. One activity is designated as 'pretransfer' editing and involves the tRNA(Pro)-independent hydrolysis of activated Ala-AMP. The other activity is designated 'posttransfer' editing and involves deacylation of mischarged Ala-tRNA(Pro). The misacylated Cys-tRNA(Pro) is not edited by ProRS. The protein is Proline--tRNA ligase of Haemophilus influenzae (strain PittGG).